Consider the following 370-residue polypeptide: Cytochrome b (370 aa).

A run of 4 helical transmembrane segments spans residues 25–45 (FGSM…FLAV), 69–90 (WLMQ…YIHI), 105–125 (WLSG…GYVL), and 170–190 (FFAL…LHIM). Residues H75 and H89 each coordinate heme b. Heme b is bound by residues H174 and H188. H193 lines the a ubiquinone pocket. The next 4 helical transmembrane spans lie at 218 to 238 (YKDL…VSFF), 280 to 300 (LGGA…PFTH), 312 to 332 (FMQL…WTAT), and 339 to 358 (FTTI…ISNP).

It belongs to the cytochrome b family. As to quaternary structure, the cytochrome bc1 complex contains 3 respiratory subunits (MT-CYB, CYC1 and UQCRFS1), 2 core proteins (UQCRC1 and UQCRC2) and probably 6 low-molecular weight proteins. Heme b is required as a cofactor.

Its subcellular location is the mitochondrion inner membrane. Functionally, component of the ubiquinol-cytochrome c reductase complex (complex III or cytochrome b-c1 complex) that is part of the mitochondrial respiratory chain. The b-c1 complex mediates electron transfer from ubiquinol to cytochrome c. Contributes to the generation of a proton gradient across the mitochondrial membrane that is then used for ATP synthesis. This chain is Cytochrome b (MT-CYB), found in Chilabothrus fordii (Ford's boa).